We begin with the raw amino-acid sequence, 474 residues long: DNA damage checkpoint control protein MEC3 (474 aa).

Serine 452 carries the phosphoserine modification.

The protein belongs to the MEC3 family. In terms of assembly, component of the checkpoint clamp complex composed of DDC1, MEC3 and RAD17. The interaction with MEC3 is performed in a RAD17-dependent manner. The checkpoint clamp complex loads onto DNA. Interacts with the DNA polymerase zeta subunit REV7. Also forms a heterotrimer with 2 RAD17 subunits. Interacts with SET1.

The protein localises to the nucleus. In terms of biological role, component of the checkpoint clamp complex involved in the surveillance mechanism that allows the DNA repair pathways to act to restore the integrity of the DNA prior to DNA synthesis or separation of the replicated chromosomes. Associates with sites of DNA damage and modulates the MEC1 signaling pathway and the activation of RAD53 in response to DNA damage at phase G1. The complex also physically regulates DNA polymerase zeta-dependent mutagenesis by controlling the access of polymerase zeta to damaged DNA. This is DNA damage checkpoint control protein MEC3 (MEC3) from Saccharomyces cerevisiae (strain ATCC 204508 / S288c) (Baker's yeast).